We begin with the raw amino-acid sequence, 775 residues long: Serine/threonine-protein kinase ppk6 (775 aa).

Phosphoserine is present on residues serine 132 and serine 134. In terms of domain architecture, Protein kinase spans 503 to 758; it reads YTTIKELGIG…IEETLQHHWF (256 aa). ATP contacts are provided by residues 509–517 and lysine 533; that span reads LGIGAYGQV. Aspartate 636 functions as the Proton acceptor in the catalytic mechanism.

Belongs to the protein kinase superfamily. Ser/Thr protein kinase family.

The protein resides in the cytoplasm. It is found in the nucleus. The catalysed reaction is L-seryl-[protein] + ATP = O-phospho-L-seryl-[protein] + ADP + H(+). It catalyses the reaction L-threonyl-[protein] + ATP = O-phospho-L-threonyl-[protein] + ADP + H(+). This is Serine/threonine-protein kinase ppk6 (ppk6) from Schizosaccharomyces pombe (strain 972 / ATCC 24843) (Fission yeast).